The following is a 199-amino-acid chain: NAD(P)H dehydrogenase (quinone) (199 aa).

A Flavodoxin-like domain is found at 4–190 (ILVLYYSTYG…DGARFQGRHV (187 aa)). Residues 10–15 (STYGHI) and 78–80 (TRF) contribute to the FMN site. Residue Tyr-12 participates in NAD(+) binding. Residue Trp-98 coordinates substrate. Residues 113-119 (STATQHG) and His-134 each bind FMN.

Belongs to the WrbA family. Requires FMN as cofactor.

The catalysed reaction is a quinone + NADH + H(+) = a quinol + NAD(+). It catalyses the reaction a quinone + NADPH + H(+) = a quinol + NADP(+). The protein is NAD(P)H dehydrogenase (quinone) of Rhizorhabdus wittichii (strain DSM 6014 / CCUG 31198 / JCM 15750 / NBRC 105917 / EY 4224 / RW1) (Sphingomonas wittichii).